A 192-amino-acid chain; its full sequence is Large ribosomal subunit protein uL5 (192 aa).

Belongs to the universal ribosomal protein uL5 family. Part of the 50S ribosomal subunit; part of the 5S rRNA/L5/L18/L25 subcomplex. Contacts the 5S rRNA and the P site tRNA. Forms a bridge to the 30S subunit in the 70S ribosome.

Functionally, this is one of the proteins that bind and probably mediate the attachment of the 5S RNA into the large ribosomal subunit, where it forms part of the central protuberance. In the 70S ribosome it contacts protein S13 of the 30S subunit (bridge B1b), connecting the 2 subunits; this bridge is implicated in subunit movement. Contacts the P site tRNA; the 5S rRNA and some of its associated proteins might help stabilize positioning of ribosome-bound tRNAs. This Mesorhizobium japonicum (strain LMG 29417 / CECT 9101 / MAFF 303099) (Mesorhizobium loti (strain MAFF 303099)) protein is Large ribosomal subunit protein uL5.